A 143-amino-acid chain; its full sequence is Beta/delta-urticatoxin-Uf2a (143 aa).

The N-terminal stretch at 1-18 is a signal peptide; it reads MGAIVLVALMALVASSSA. The propeptide occupies 19 to 80; that stretch reads FSDIEHNIMK…MMLSGRPQPN (62 aa). Intrachain disulfides connect cysteine 83–cysteine 100, cysteine 90–cysteine 105, cysteine 99–cysteine 113, cysteine 115–cysteine 129, cysteine 122–cysteine 134, and cysteine 128–cysteine 142.

It belongs to the urticatoxin-2 family. In terms of tissue distribution, expressed in trichomes, that are stiff epidermal hairs located on the surface of petioles and leaves.

It is found in the secreted. Plant defense neurotoxin that causes pain and systemic symptoms in mammals via modulation of voltage-gated sodium channels (Nav). Potent modulator of human Nav1.5/SCN5A (EC(50)=55 nM), Nav1.6/SCN8A (EC(50)=0.86 nM), and Nav1.7/SCN9A (EC(50)=208 nM), where it shifts the activation threshold to more negative potentials and delays fast inactivation. Also shifts the voltage-dependence of steady-state fast inactivation of Nav1.6/SCN8A, but not that of Nav1.5/SCN5A or Nav1.7/SCN9A. On Nav1.7/SCN9A, principally acts by binding to extracellular loops of domain IV (Nav site 3). Does not affect current response of the tetrodotoxin (TTX)-resistant Nav1.8/SCN10A sodium channel. In vivo, intraplantar injection into mice causes numerous dose-dependent, immediate, and long-lasting spontaneous pain behaviors, while no swelling is observed in the injected paw. At the highest doses tested, systemic symptoms including hypokinesia and hypersalivation are observed. This chain is Beta/delta-urticatoxin-Uf2a, found in Urtica ferox (Tree nettle).